The chain runs to 483 residues: Cobyric acid synthase (483 aa).

The 188-residue stretch at 252-439 folds into the GATase cobBQ-type domain; that stretch reads KLNVVVPVLT…LHGFFDEAEA (188 aa). Cys333 serves as the catalytic Nucleophile. His431 is an active-site residue.

This sequence belongs to the CobB/CobQ family. CobQ subfamily.

It functions in the pathway cofactor biosynthesis; adenosylcobalamin biosynthesis. Its function is as follows. Catalyzes amidations at positions B, D, E, and G on adenosylcobyrinic A,C-diamide. NH(2) groups are provided by glutamine, and one molecule of ATP is hydrogenolyzed for each amidation. This Vibrio parahaemolyticus serotype O3:K6 (strain RIMD 2210633) protein is Cobyric acid synthase.